A 331-amino-acid polypeptide reads, in one-letter code: MAVFTAVSDADLALWMRHYDLGDVVAFRGIPSGIENSNFFLTTTRGEYVLTIFENLTAGQLPFYVDLMSHLAKHGVPVPAPVARDDGTLFGELHGKPAAIVTKLEGAAQLAPGVEHCVEVGQMLARMHLAGRDYPRHQPNLRSLPWWRDTVPAIAPFVTGEQRALLEGELAHQAAFFASDDYAALPEGPCHCDLFRDNALFAHAEPDTGHSVRLGGFFDFYFAGCDKWLFDVAVTVNDWCVDLPTGALDAARADALLRAYQTVRPFTAGERRHWGDMLRAGAYRFWVSRLYDFHLPRAAQMLKPHDPGHFERILRERIAHAGALPETHACN.

Belongs to the pseudomonas-type ThrB family.

It carries out the reaction L-homoserine + ATP = O-phospho-L-homoserine + ADP + H(+). It participates in amino-acid biosynthesis; L-threonine biosynthesis; L-threonine from L-aspartate: step 4/5. The sequence is that of Homoserine kinase from Burkholderia pseudomallei (strain 1106a).